The following is a 357-amino-acid chain: MSIQIQGVSKQYGTFQALTDIHLDIPKGELVALLGPSGSGKTTLLRIIAGLEEADEGSISFEGEDLTDIHVKNRQVGFVFQHYALFKHMNVFENVAFGLKVRKKSLRPSAEAIEEKVTELLKLVKMDGFAKRYPAQLSGGQRQRIALARALAVEPKILLLDEPFGALDAKVRKELRRWLRKLHDEFQITSVFVTHDQEEALDVADRIVVMNEGRIEQMGTPEEVYENPASPFVYDFLGNVNLFHGRVHKGKLNVGSVELEAPEHKHISNVDGVAYVRPHHLSISRTKQSVDAIPAKVSYSHAVGPVVYVELKRDGTDEYLEAEISKEQFRQLSIQAGDVVYVQPKEVKVFIPEDFVI.

In terms of domain architecture, ABC transporter spans 3–237 (IQIQGVSKQY…PASPFVYDFL (235 aa)). An ATP-binding site is contributed by 35–42 (GPSGSGKT).

Belongs to the ABC transporter superfamily. Sulfate/tungstate importer (TC 3.A.1.6) family. The complex is composed of two ATP-binding proteins (CysA), two transmembrane proteins (CysT and CysW) and a solute-binding protein (CysP).

The protein resides in the cell membrane. It catalyses the reaction sulfate(out) + ATP + H2O = sulfate(in) + ADP + phosphate + H(+). The enzyme catalyses thiosulfate(out) + ATP + H2O = thiosulfate(in) + ADP + phosphate + H(+). Part of the ABC transporter complex CysAWTP involved in sulfate/thiosulfate import. Responsible for energy coupling to the transport system. The polypeptide is Sulfate/thiosulfate import ATP-binding protein CysA (Bacillus cereus (strain ATCC 10987 / NRS 248)).